Consider the following 207-residue polypeptide: Octanoyltransferase (207 aa).

A BPL/LPL catalytic domain is found at 27-203 (ADTEDELWVV…HLETQLTPKA (177 aa)). Residues 66–73 (RGGQITYH), 133–135 (SLG), and 146–148 (GLA) each bind substrate. Cys-164 serves as the catalytic Acyl-thioester intermediate.

The protein belongs to the LipB family.

The protein resides in the cytoplasm. It catalyses the reaction octanoyl-[ACP] + L-lysyl-[protein] = N(6)-octanoyl-L-lysyl-[protein] + holo-[ACP] + H(+). The protein operates within protein modification; protein lipoylation via endogenous pathway; protein N(6)-(lipoyl)lysine from octanoyl-[acyl-carrier-protein]: step 1/2. In terms of biological role, catalyzes the transfer of endogenously produced octanoic acid from octanoyl-acyl-carrier-protein onto the lipoyl domains of lipoate-dependent enzymes. Lipoyl-ACP can also act as a substrate although octanoyl-ACP is likely to be the physiological substrate. The chain is Octanoyltransferase from Neisseria gonorrhoeae (strain ATCC 700825 / FA 1090).